A 148-amino-acid chain; its full sequence is Protein NrdI (148 aa).

The protein belongs to the NrdI family.

Its function is as follows. Probably involved in ribonucleotide reductase function. The sequence is that of Protein NrdI from Mycolicibacterium gilvum (strain PYR-GCK) (Mycobacterium gilvum (strain PYR-GCK)).